We begin with the raw amino-acid sequence, 522 residues long: 2-isopropylmalate synthase (522 aa).

The Pyruvate carboxyltransferase domain maps to Val5–His267. Residues Asp14, His202, His204, and Asn238 each coordinate Mn(2+). Residues Gln392 to Val522 are regulatory domain.

The protein belongs to the alpha-IPM synthase/homocitrate synthase family. LeuA type 1 subfamily. In terms of assembly, homodimer. Mn(2+) serves as cofactor.

It localises to the cytoplasm. The enzyme catalyses 3-methyl-2-oxobutanoate + acetyl-CoA + H2O = (2S)-2-isopropylmalate + CoA + H(+). It participates in amino-acid biosynthesis; L-leucine biosynthesis; L-leucine from 3-methyl-2-oxobutanoate: step 1/4. Functionally, catalyzes the condensation of the acetyl group of acetyl-CoA with 3-methyl-2-oxobutanoate (2-ketoisovalerate) to form 3-carboxy-3-hydroxy-4-methylpentanoate (2-isopropylmalate). This chain is 2-isopropylmalate synthase, found in Shewanella sp. (strain MR-4).